Reading from the N-terminus, the 170-residue chain is MKTLFLGVTLGLAAALSFTLEEEDITGTWYVKAMVVDKDFPEDRRPRKVSPVKVTALGGGKLEATFTFMREDRCIQKKILMRKTEEPGKYSAYGGRKLMYLQELPRRDHYIFYCKDQHHGGLLHMGKLVGRNSDTNREALEEFKKLVQRKGLSEEDIFTPLQTGSCVPEH.

Positions 1 to 15 are cleaved as a signal peptide; it reads MKTLFLGVTLGLAAA. A disulfide bridge connects residues Cys-74 and Cys-166.

This sequence belongs to the calycin superfamily. Lipocalin family. As to expression, strongly expressed in genital sphere organs such as the prostate and mammary glands.

It is found in the secreted. In terms of biological role, probably binds and transports small hydrophobic volatile molecules. This chain is Odorant-binding protein 2b (OBP2B), found in Homo sapiens (Human).